The chain runs to 379 residues: MIISASTDYRAAAERKLPPFLFHYADGGAYAEHTLRRNVADLSNIELRQRVLKNMSELDLSTELFGEKMSMPVGLAPVGLTGMYARRGEVQAAKAAAAKGIPFTLSTVSVCPIEEVAPAIDRPMWFQLYVLKDRGFMRNALERAKAAGCSTLVFTVDMPVPGARYRDAHSGMSGPNGPLRRVLQAMTHPQWAWDVGVMGKPHDLGNISAYRGNPTGLADYIGWLGANFDPSISWKDLEWIRDFWDGPMVIKGILDPEDARDAVTFGADGIIVSNHGGRQLDGVLSSARALPAIADAVKGELKILADSGIRTGLDVVRMLALGADTVLLGRAFIYALAVAGQAGVSNLLDLIEKEMRVAMVLTGAKSIAEITSDLLVKER.

The 379-residue stretch at 1 to 379 folds into the FMN hydroxy acid dehydrogenase domain; sequence MIISASTDYR…ITSDLLVKER (379 aa). A substrate-binding site is contributed by tyrosine 24. FMN-binding residues include serine 106 and glutamine 127. Tyrosine 129 contacts substrate. Threonine 155 contacts FMN. Arginine 164 contacts substrate. Lysine 251 is a binding site for FMN. Histidine 275 (proton acceptor) is an active-site residue. Arginine 278 is a binding site for substrate. 306 to 330 contributes to the FMN binding site; it reads DSGIRTGLDVVRMLALGADTVLLGR.

It belongs to the FMN-dependent alpha-hydroxy acid dehydrogenase family. Homotetramer. Requires FMN as cofactor.

It is found in the cell inner membrane. It catalyses the reaction (S)-lactate + A = pyruvate + AH2. In terms of biological role, catalyzes the conversion of L-lactate to pyruvate. Is coupled to the respiratory chain. The protein is L-lactate dehydrogenase of Ectopseudomonas mendocina (strain ymp) (Pseudomonas mendocina).